The chain runs to 1357 residues: DNA-directed RNA polymerase subunit beta (1357 aa).

Belongs to the RNA polymerase beta chain family. In terms of assembly, the RNAP catalytic core consists of 2 alpha, 1 beta, 1 beta' and 1 omega subunit. When a sigma factor is associated with the core the holoenzyme is formed, which can initiate transcription.

It catalyses the reaction RNA(n) + a ribonucleoside 5'-triphosphate = RNA(n+1) + diphosphate. In terms of biological role, DNA-dependent RNA polymerase catalyzes the transcription of DNA into RNA using the four ribonucleoside triphosphates as substrates. The chain is DNA-directed RNA polymerase subunit beta from Pseudomonas aeruginosa (strain UCBPP-PA14).